The chain runs to 461 residues: Steroidogenic factor 1 (461 aa).

A DNA-binding region (nuclear receptor) is located at residues 10–85; the sequence is DELCPVCGDK…VGMRLEAVRA (76 aa). An NR C4-type zinc finger spans residues 13–33; sequence CPVCGDKVSGYHYGLLTCESC. Residues Lys-34, Lys-38, and Lys-72 each carry the N6-acetyllysine modification. The NR C4-type zinc finger occupies 49-73; it reads CTESQSCKIDKTQRKRCPFCRFQKC. A Glycyl lysine isopeptide (Lys-Gly) (interchain with G-Cter in SUMO) cross-link involves residue Lys-119. Positions 119–150 are disordered; it reads KLETGPPMGVAPPPPPPPDYMLPPGLHAPEPK. Pro residues predominate over residues 127–139; sequence GVAPPPPPPPDYM. A Glycyl lysine isopeptide (Lys-Gly) (interchain with G-Cter in SUMO) cross-link involves residue Lys-194. Phosphoserine; by CDK7 is present on Ser-203. Residues 222–459 form the NR LBD domain; the sequence is GVPELIVQLL…NLLIEMLQAK (238 aa). Residues 230 to 461 form an important for dimerization region; that stretch reads LLQLEPDEDQ…LIEMLQAKQT (232 aa). A 1,2-diacyl-sn-glycero-3-phosphocholine-binding residues include Gly-341, Tyr-436, and Lys-440.

Belongs to the nuclear hormone receptor family. NR5 subfamily. As to quaternary structure, binds DNA as a monomer. Part of a complex consisting of SFPQ, NONO and NR5A1. Interacts with NR0B2, NCOA2 and PPARGC1A. Interacts with DGKQ and CDK7. Binds to and activated by HIPK3. Acetylation stimulates the transcriptional activity. Post-translationally, sumoylation reduces CDK7-mediated phosphorylation on Ser-203. In terms of processing, phosphorylated on Ser-203 by CDK7. This phosphorylation promotes transcriptional activity.

It localises to the nucleus. In terms of biological role, transcriptional activator. Seems to be essential for sexual differentiation and formation of the primary steroidogenic tissues. Binds to the Ad4 site found in the promoter region of steroidogenic P450 genes such as CYP11A, CYP11B and CYP21B. Also regulates the AMH/Muellerian inhibiting substance gene as well as the AHCH and STAR genes. 5'-YCAAGGYC-3' and 5'-RRAGGTCA-3' are the consensus sequences for the recognition by NR5A1. The SFPQ-NONO-NR5A1 complex binds to the CYP17 promoter and regulates basal and cAMP-dependent transcriptional activity. Binds phosphatidylcholine and phospholipids with a phosphatidylinositol (PI) headgroup, in particular PI(3,4)P2 and PI(3,4,5)P3. Activated by the phosphorylation of NR5A1 by HIPK3 leading to increased steroidogenic gene expression upon cAMP signaling pathway stimulation. This chain is Steroidogenic factor 1 (NR5A1), found in Sus scrofa (Pig).